The primary structure comprises 300 residues: uncharacterized protein (300 aa).

The disordered stretch occupies residues 230–251; that stretch reads LRQSTSRQSISRQSISRQSTSR. A compositionally biased stretch (low complexity) spans 231–251; that stretch reads RQSTSRQSISRQSISRQSTSR.

This is an uncharacterized protein from Acanthamoeba polyphaga (Amoeba).